Here is a 201-residue protein sequence, read N- to C-terminus: Lipopolysaccharide core heptose(II)-phosphate phosphatase (201 aa).

A signal peptide spans 1–35 (MLAFTLRFIKNKRYLATLAGALVIIAGLTSQHAWS).

This sequence belongs to the phosphoglycerate mutase family. Ais subfamily.

Its subcellular location is the periplasm. The protein operates within bacterial outer membrane biogenesis; lipopolysaccharide metabolism. In terms of biological role, catalyzes the dephosphorylation of heptose(II) of the outer membrane lipopolysaccharide core. The chain is Lipopolysaccharide core heptose(II)-phosphate phosphatase from Salmonella paratyphi A (strain AKU_12601).